The sequence spans 272 residues: Small ribosomal subunit protein uS2 (272 aa).

A disordered region spans residues 238–272 (ASKEEQTEEAEEETLSSKYREQDFQEAKSGARGEK). Residues 255–272 (KYREQDFQEAKSGARGEK) show a composition bias toward basic and acidic residues.

The protein belongs to the universal ribosomal protein uS2 family.

The chain is Small ribosomal subunit protein uS2 from Protochlamydia amoebophila (strain UWE25).